Here is a 299-residue protein sequence, read N- to C-terminus: Probable alpha-L-glutamate ligase (299 aa).

One can recognise an ATP-grasp domain in the interval 111–293 (LQALAAANIA…VATQMIAYLE (183 aa)). ATP contacts are provided by residues lysine 147, 184 to 185 (DF), aspartate 193, and 217 to 219 (RAN). Positions 254, 266, and 268 each coordinate Mg(2+). Mn(2+)-binding residues include aspartate 254, glutamate 266, and asparagine 268.

Belongs to the RimK family. Mg(2+) serves as cofactor. Mn(2+) is required as a cofactor.

The polypeptide is Probable alpha-L-glutamate ligase (Mannheimia succiniciproducens (strain KCTC 0769BP / MBEL55E)).